A 249-amino-acid polypeptide reads, in one-letter code: Small ribosomal subunit protein uS3 (249 aa).

The KH type-2 domain occupies 39–108 (IRQLINKKLA…TVAVNVAEIP (70 aa)). The segment at 214 to 249 (ETFARPQRRDRDERRPEGGDRPARRRPTARRRTGGE) is disordered. Basic and acidic residues predominate over residues 220–235 (QRRDRDERRPEGGDRP). The segment covering 236–249 (ARRRPTARRRTGGE) has biased composition (basic residues).

This sequence belongs to the universal ribosomal protein uS3 family. Part of the 30S ribosomal subunit. Forms a tight complex with proteins S10 and S14.

Binds the lower part of the 30S subunit head. Binds mRNA in the 70S ribosome, positioning it for translation. The chain is Small ribosomal subunit protein uS3 from Deinococcus radiodurans (strain ATCC 13939 / DSM 20539 / JCM 16871 / CCUG 27074 / LMG 4051 / NBRC 15346 / NCIMB 9279 / VKM B-1422 / R1).